We begin with the raw amino-acid sequence, 146 residues long: Putative calcium-binding protein CML19 (146 aa).

EF-hand domains lie at 3–38, 40–75, 79–114, and 115–146; these read AATA…ALGE, MSAE…LEMG, ERCR…LGSH, and QGIE…MMDA. Ca(2+) contacts are provided by Asp16, Asp18, Asp20, Lys22, Glu27, Asp53, Asp55, Asp57, and Glu64. Ca(2+) is bound by residues Asp128, Asp130, Asp132, and Glu139.

Its function is as follows. Potential calcium sensor. The protein is Putative calcium-binding protein CML19 (CML19) of Oryza sativa subsp. japonica (Rice).